A 462-amino-acid chain; its full sequence is Anthranilate synthase component 1 (462 aa).

Residues Ser-37 and 244 to 246 (PYM) each bind L-tryptophan. 279–280 (GT) is a chorismate binding site. Glu-306 is a Mg(2+) binding site. Chorismate-binding positions include Tyr-394, Arg-414, 428-430 (GAG), and Gly-430. Glu-443 contacts Mg(2+).

It belongs to the anthranilate synthase component I family. In terms of assembly, heterotetramer consisting of two non-identical subunits: a beta subunit (TrpG) and a large alpha subunit (TrpE). Mg(2+) is required as a cofactor.

It carries out the reaction chorismate + L-glutamine = anthranilate + pyruvate + L-glutamate + H(+). It functions in the pathway amino-acid biosynthesis; L-tryptophan biosynthesis; L-tryptophan from chorismate: step 1/5. Feedback inhibited by tryptophan. Part of a heterotetrameric complex that catalyzes the two-step biosynthesis of anthranilate, an intermediate in the biosynthesis of L-tryptophan. In the first step, the glutamine-binding beta subunit (TrpG) of anthranilate synthase (AS) provides the glutamine amidotransferase activity which generates ammonia as a substrate that, along with chorismate, is used in the second step, catalyzed by the large alpha subunit of AS (TrpE) to produce anthranilate. In the absence of TrpG, TrpE can synthesize anthranilate directly from chorismate and high concentrations of ammonia. This is Anthranilate synthase component 1 (trpE) from Thermus thermophilus (strain ATCC 27634 / DSM 579 / HB8).